The following is a 473-amino-acid chain: MALQTGEPRTLAEKIWDDHIVVSGGGCAPDLIYIDLHLVHEVTSPQAFDGLRLAGRRVRRPELTLATEDHNVPTVDIDQPIADPVSRTQVETLRRNCAEFGIRLHSMGDIEQGIVHVVGPQLGLTQPGMTIVCGDSHTSTHGAFGALAMGIGTSEVEHVLATQTLPLRPFKTMAVNVDGRLPDGVSAKDIILALIAKIGTGGGQGHVIEYRGSAIESLSMEGRMTICNMSIEAGARAGMVAPDETTYAFLRGRPHAPTGAQWDTALVYWQRLRTDVGAVFDTEVYLDAASLSPFVTWGTNPGQGVPLAAAVPDPQLMTDDAERQAAEKALAYMDLRPGTAMRDIAVDAVFVGSCTNGRIEDLRVVAEVLRGRKVADGVRMLIVPGSMRVRAQAEAEGLGEIFTDAGAQWRQAGCSMCLGMNPDQLASGERCAATSNRNFEGRQGAGGRTHLVSPAVAAATAVRGTLSSPADLN.

Residues cysteine 354, cysteine 414, and cysteine 417 each contribute to the [4Fe-4S] cluster site.

The protein belongs to the aconitase/IPM isomerase family. LeuC type 1 subfamily. Heterodimer of LeuC and LeuD. [4Fe-4S] cluster is required as a cofactor.

It carries out the reaction (2R,3S)-3-isopropylmalate = (2S)-2-isopropylmalate. Its pathway is amino-acid biosynthesis; L-leucine biosynthesis; L-leucine from 3-methyl-2-oxobutanoate: step 2/4. In terms of biological role, catalyzes the isomerization between 2-isopropylmalate and 3-isopropylmalate, via the formation of 2-isopropylmaleate. The polypeptide is 3-isopropylmalate dehydratase large subunit (Mycobacterium tuberculosis (strain CDC 1551 / Oshkosh)).